A 150-amino-acid polypeptide reads, in one-letter code: MEKRKDTKTTLAKASDDQNKAWYVINAEGKTLGRLSSEVAKILRGKHKVTFTPHVAMGDGVIVINAEKVRLTGAKRAQKVYHYYTGFISGMREVPFENMIARKPAYVIEHAVKGMLPKTKLGRRQMKSLRVVKGSSYAQYEAIKPIVLDA.

It belongs to the universal ribosomal protein uL13 family. As to quaternary structure, part of the 50S ribosomal subunit.

Functionally, this protein is one of the early assembly proteins of the 50S ribosomal subunit, although it is not seen to bind rRNA by itself. It is important during the early stages of 50S assembly. This chain is Large ribosomal subunit protein uL13, found in Chlamydia muridarum (strain MoPn / Nigg).